A 294-amino-acid polypeptide reads, in one-letter code: Nucleotide-binding protein NT01CX_1284 (294 aa).

8-15 (GLSGAGKS) contributes to the ATP binding site. 59-62 (DIRG) is a binding site for GTP.

It belongs to the RapZ-like family.

Functionally, displays ATPase and GTPase activities. The protein is Nucleotide-binding protein NT01CX_1284 of Clostridium novyi (strain NT).